A 210-amino-acid polypeptide reads, in one-letter code: UPF0301 protein Mnod_6933 (210 aa).

It belongs to the UPF0301 (AlgH) family.

The chain is UPF0301 protein Mnod_6933 from Methylobacterium nodulans (strain LMG 21967 / CNCM I-2342 / ORS 2060).